The chain runs to 438 residues: MLDILLLRKDLDSAVARLETRKKPQAFLNVEAFQSLEAERKSLQTRTEELQSKRNQLSKQIGMLMGKGEKDAAEAAKAEVGSLKTELDQSATRLEQIQGELQTMLLAVPNLPHDSVPVGADESGNVEARRWGTPKTFDFEVKDHVDVGQPLGLDFDMGVKLSGSRFTVMKGPIARLHRALAQFMIDLQTDSHGYTECYVPYAVNADSLKGTGQLPKFEGDLFAAKKGGQDGEPVPDNAALYLIPTAEVPLTNFVRDVVVAEDQLPIKLTAHSPCFRSEAGSYGRDTRGMIRQHQFDKVEMVQIVHPEKSYEALEEMTGHAEAVLQKLGLPYRVMSLCTGDMGFGAAKTYDLEVWLPAQNTYREISSVSNCEAFQARRLQARFKNAQGKNELVHTLNGSGLAVGRTLVAVLENYQNADGSVTIPEALRPYMGGQTLLKA.

An L-serine-binding site is contributed by 245–247; the sequence is TAE. 276 to 278 is an ATP binding site; sequence RSE. Residue E299 participates in L-serine binding. 363 to 366 is a binding site for ATP; the sequence is EISS. S398 serves as a coordination point for L-serine.

This sequence belongs to the class-II aminoacyl-tRNA synthetase family. Type-1 seryl-tRNA synthetase subfamily. Homodimer. The tRNA molecule binds across the dimer.

It localises to the cytoplasm. The enzyme catalyses tRNA(Ser) + L-serine + ATP = L-seryl-tRNA(Ser) + AMP + diphosphate + H(+). The catalysed reaction is tRNA(Sec) + L-serine + ATP = L-seryl-tRNA(Sec) + AMP + diphosphate + H(+). It participates in aminoacyl-tRNA biosynthesis; selenocysteinyl-tRNA(Sec) biosynthesis; L-seryl-tRNA(Sec) from L-serine and tRNA(Sec): step 1/1. Catalyzes the attachment of serine to tRNA(Ser). Is also able to aminoacylate tRNA(Sec) with serine, to form the misacylated tRNA L-seryl-tRNA(Sec), which will be further converted into selenocysteinyl-tRNA(Sec). This is Serine--tRNA ligase from Delftia acidovorans (strain DSM 14801 / SPH-1).